The sequence spans 363 residues: Pyrimidine monooxygenase RutA (363 aa).

Residues 49-50 (IK), asparagine 115, glutamate 124, 140-141 (RY), and serine 190 contribute to the FMN site.

The protein belongs to the NtaA/SnaA/DszA monooxygenase family. RutA subfamily.

The enzyme catalyses uracil + FMNH2 + NADH + O2 = (Z)-3-ureidoacrylate + FMN + NAD(+) + H2O + H(+). The catalysed reaction is thymine + FMNH2 + NADH + O2 = (Z)-2-methylureidoacrylate + FMN + NAD(+) + H2O + H(+). Catalyzes the pyrimidine ring opening between N-3 and C-4 by an unusual flavin hydroperoxide-catalyzed mechanism, adding oxygen atoms in the process to yield ureidoacrylate peracid, that immediately reacts with FMN forming ureidoacrylate and FMN-N(5)-oxide. The FMN-N(5)-oxide reacts spontaneously with NADH to produce FMN. Requires the flavin reductase RutF to regenerate FMN in vivo. This Escherichia coli O127:H6 (strain E2348/69 / EPEC) protein is Pyrimidine monooxygenase RutA.